We begin with the raw amino-acid sequence, 196 residues long: ATP-dependent Clp protease proteolytic subunit (196 aa).

The active-site Nucleophile is S101. Residue H126 is part of the active site.

It belongs to the peptidase S14 family. As to quaternary structure, component of the chloroplastic Clp protease core complex.

It is found in the plastid. The protein resides in the chloroplast stroma. The enzyme catalyses Hydrolysis of proteins to small peptides in the presence of ATP and magnesium. alpha-casein is the usual test substrate. In the absence of ATP, only oligopeptides shorter than five residues are hydrolyzed (such as succinyl-Leu-Tyr-|-NHMec, and Leu-Tyr-Leu-|-Tyr-Trp, in which cleavage of the -Tyr-|-Leu- and -Tyr-|-Trp bonds also occurs).. Its function is as follows. Cleaves peptides in various proteins in a process that requires ATP hydrolysis. Has a chymotrypsin-like activity. Plays a major role in the degradation of misfolded proteins. In Vitis vinifera (Grape), this protein is ATP-dependent Clp protease proteolytic subunit.